The primary structure comprises 75 residues: uncharacterized protein (75 aa).

This is an uncharacterized protein from Dryophytes versicolor (chameleon treefrog).